The primary structure comprises 96 residues: Co-chaperonin GroES (96 aa).

This sequence belongs to the GroES chaperonin family. In terms of assembly, heptamer of 7 subunits arranged in a ring. Interacts with the chaperonin GroEL.

Its subcellular location is the cytoplasm. In terms of biological role, together with the chaperonin GroEL, plays an essential role in assisting protein folding. The GroEL-GroES system forms a nano-cage that allows encapsulation of the non-native substrate proteins and provides a physical environment optimized to promote and accelerate protein folding. GroES binds to the apical surface of the GroEL ring, thereby capping the opening of the GroEL channel. In Streptococcus pyogenes serotype M18 (strain MGAS8232), this protein is Co-chaperonin GroES.